The chain runs to 1161 residues: Integrin alpha-D (1161 aa).

The signal sequence occupies residues 1-17 (MTFGTVLLLSVLASYHG). Topologically, residues 18–1099 (FNLDVEEPTI…MVLEEDEVYN (1082 aa)) are extracellular. FG-GAP repeat units follow at residues 19-76 (NLDV…MCQP) and 77-136 (IPLH…IIQT). N-linked (GlcNAc...) asparagine glycosylation occurs at asparagine 59. A disulfide bridge connects residues cysteine 67 and cysteine 74. Residues asparagine 87 and asparagine 99 are each glycosylated (N-linked (GlcNAc...) asparagine). A disulfide bridge connects residues cysteine 106 and cysteine 124. The VWFA domain maps to 150–332 (DIVFLIDGSG…SIQKQLQEKI (183 aa)). FG-GAP repeat units lie at residues 339–390 (QSRA…PTFI), 391–442 (NMSQ…SRQW), 443–503 (RKKA…RVQW), 506–564 (DAVL…SGIS), and 569–629 (QRIA…FSPV). Asparagine 391 carries an N-linked (GlcNAc...) asparagine glycan. Ca(2+)-binding residues include aspartate 465, aspartate 467, aspartate 469, aspartate 473, aspartate 529, asparagine 531, aspartate 533, aspartate 537, aspartate 592, aspartate 596, and aspartate 600. Cysteine 654 and cysteine 709 are joined by a disulfide. 2 N-linked (GlcNAc...) asparagine glycosylation sites follow: asparagine 690 and asparagine 732. 2 disulfide bridges follow: cysteine 768–cysteine 774 and cysteine 845–cysteine 860. Residues asparagine 872 and asparagine 956 are each glycosylated (N-linked (GlcNAc...) asparagine). Disulfide bonds link cysteine 993–cysteine 1017 and cysteine 1022–cysteine 1027. Asparagine 1045 carries N-linked (GlcNAc...) asparagine glycosylation. A helical membrane pass occupies residues 1100–1120 (AIPIIMGSSVGALLLLALITA). The Cytoplasmic portion of the chain corresponds to 1121–1161 (TLYKLGFFKRHYKEMLEDKPEDTATFSGDDFSCVAPNVPLS). Residues 1126–1130 (GFFKR) carry the GFFKR motif motif.

Belongs to the integrin alpha chain family. In terms of assembly, heterodimer of an alpha and a beta subunit. Alpha-D associates with beta-2. Expressed moderately on myelomonocytic cell lines and subsets of peripheral blood leukocytes and strongly on tissue-specialized cells, including macrophages foam cells within atherosclerotic plaques, and on splenic red pulp macrophages.

It localises to the membrane. Its function is as follows. Integrin alpha-D/beta-2 is a receptor for ICAM3 and VCAM1. May play a role in the atherosclerotic process such as clearing lipoproteins from plaques and in phagocytosis of blood-borne pathogens, particulate matter, and senescent erythrocytes from the blood. The polypeptide is Integrin alpha-D (ITGAD) (Homo sapiens (Human)).